We begin with the raw amino-acid sequence, 107 residues long: Thioredoxin (107 aa).

The 106-residue stretch at 2–107 (DSIVHVTDDS…QLTAFLDSNX (106 aa)) folds into the Thioredoxin domain. C32 and C35 are joined by a disulfide.

Belongs to the thioredoxin family.

In terms of biological role, participates in various redox reactions through the reversible oxidation of its active center dithiol to a disulfide and catalyzes dithiol-disulfide exchange reactions. The sequence is that of Thioredoxin (trxA) from Allochromatium vinosum (Chromatium vinosum).